Here is an 865-residue protein sequence, read N- to C-terminus: Anaphase-promoting complex subunit 6 (865 aa).

3 TPR repeats span residues 11–42 (IEKQLKEKIENALSIHSYPTAIFFSDKLLNLV), 46–75 (SKEYVKILYILCDALYLDRQFQRSSYLIQK), and 88–149 (EDYQ…LQIL). Residues 153–293 (NDSSENMDDE…NNNNNNNNNF (141 aa)) form a disordered region. A compositionally biased stretch (acidic residues) spans 183 to 202 (NCDDDDDDDDDDDDDDDDEK). The segment covering 249–292 (NKNNNKNNNNNNNNNNNNNNNNNNNNNNNNNNNNNNNNNNNNNN) has biased composition (low complexity). 9 TPR repeats span residues 300–331 (IRSSISCLKGKCYESMDNLKKAKFWYIKALLT), 336–359 (FEAFESLTKNHLLTYQEEISLLEK), 366–438 (DSWI…DIST), 478–506 (DIQTWISEYYFYRHQFQESYSITKRILKQ), 515–542 (CLMVNISSMFELQLTNELYFTCHQLVDS), 573–602 (AISWYGVACYYHLIQNSDQTQRFFTKSTTL), 607–635 (GASWLGFGHFFASKGEHDQAMAAYRTSSR), 642–670 (LPLLCIGMELIRVHNLNLASQYILQAKDI), and 675–709 (PMIFNELGIIEYKNSQYNEAIKLFETALEICKIKS). The span at 403–434 (SNNNTFGANNNNNNNNNNNNNNNNNNNNNSNN) shows a compositional bias: low complexity. Residues 403–436 (SNNNTFGANNNNNNNNNNNNNNNNNNNNNSNNDI) are disordered. The disordered stretch occupies residues 738 to 767 (GIGNNNNNNNNRRTTTTTTTTSNNQKKNSS). TPR repeat units follow at residues 777–809 (ESWEPTIYNLAHCYRKLRKFELALHYYTMSLSL) and 814–843 (PSTYSALGFTHHLQGNFDEAIDYYHQSLSI).

The protein belongs to the APC6/CDC16 family. As to quaternary structure, the APC/C is composed of at least 13 subunits that stay tightly associated throughout the cell cycle: anapc1, anapc2, anapc3, anapc4, anapc5, anapc6, anapc7, anapc8, anapc10, anapc11, cdc20, cdc26 and cdh1.

Its subcellular location is the nucleus. It participates in protein modification; protein ubiquitination. Functionally, component of the anaphase promoting complex/cyclosome (APC/C), a cell cycle-regulated E3 ubiquitin-protein ligase complex that controls progression through mitosis and the G1 phase of the cell cycle. The protein is Anaphase-promoting complex subunit 6 (anapc6) of Dictyostelium discoideum (Social amoeba).